The primary structure comprises 72 residues: UPF0270 protein PM1156 (72 aa).

The protein belongs to the UPF0270 family.

This chain is UPF0270 protein PM1156, found in Pasteurella multocida (strain Pm70).